The following is a 265-amino-acid chain: MSIVSLLNIDVLNNPAPFGSPYEFQITFECLEPLKHDLEWKLTYVGSSTSFEHDQELDSLLVGPVPVGVNKFVFTADPPTVDLIPASELVSVTVIILSCSYNDREFVRVGYYVNNEYDSEELRLNPPPKVQVDHVVRNILAEKPRVTRFNIVWDNEGEQGEEFPPEQPDADLEDDEEEYGAGEEEEEVEEEVEGETEADAKEDIEAEGEAEAEGDGDGDGDGEDEDLEEASDEEMEVVDDEVGEESEGEDDKEDKDDKDDKKDDK.

Composition is skewed to acidic residues over residues 155-197 and 204-257; these read NEGE…GETE and IEAE…DKDD. Positions 155 to 265 are disordered; that stretch reads NEGEQGEEFP…DDKDDKKDDK (111 aa).

This sequence belongs to the ASF1 family. As to quaternary structure, interacts with histone H3 and histone H4.

The protein localises to the nucleus. In terms of biological role, histone chaperone that facilitates histone deposition and histone exchange and removal during nucleosome assembly and disassembly. In Yarrowia lipolytica (strain CLIB 122 / E 150) (Yeast), this protein is Histone chaperone ASF1 (ASF1).